A 145-amino-acid polypeptide reads, in one-letter code: MIALIQRVSEAKVVVDGATIGEIDKGLLVLLGVEREDNIEKMQKLATKVMSYRVFSDENGKMNLNLEQAGGSLLVVSQFTLAADTGRGLRPSFSGAGTPDQARELYEAFVDFCKSKGVNTQTGQFAADMKVSLVNDGPVTFNLQV.

A Gly-cisPro motif, important for rejection of L-amino acids motif is present at residues 137–138 (GP).

This sequence belongs to the DTD family. Homodimer.

It localises to the cytoplasm. It catalyses the reaction glycyl-tRNA(Ala) + H2O = tRNA(Ala) + glycine + H(+). The catalysed reaction is a D-aminoacyl-tRNA + H2O = a tRNA + a D-alpha-amino acid + H(+). Its function is as follows. An aminoacyl-tRNA editing enzyme that deacylates mischarged D-aminoacyl-tRNAs. Also deacylates mischarged glycyl-tRNA(Ala), protecting cells against glycine mischarging by AlaRS. Acts via tRNA-based rather than protein-based catalysis; rejects L-amino acids rather than detecting D-amino acids in the active site. By recycling D-aminoacyl-tRNA to D-amino acids and free tRNA molecules, this enzyme counteracts the toxicity associated with the formation of D-aminoacyl-tRNA entities in vivo and helps enforce protein L-homochirality. The polypeptide is D-aminoacyl-tRNA deacylase (Shewanella pealeana (strain ATCC 700345 / ANG-SQ1)).